Here is an 874-residue protein sequence, read N- to C-terminus: Ectonucleotide pyrophosphatase/phosphodiesterase family member 3 (874 aa).

The Cytoplasmic segment spans residues 1-11; sequence MQSTLNLSTEE. Residues 12–30 form a helical; Signal-anchor for type II membrane protein membrane-spanning segment; it reads PVKRNTVKKYKIICIVLLI. At 31 to 874 the chain is on the extracellular side; that stretch reads LLVAVSLALG…TYLPVFETVI (844 aa). 2 consecutive SMB domains span residues 50–93 and 94–138; these read EQGS…VQST and QIWT…GETS. Intrachain disulfides connect Cys-54–Cys-71, Cys-58–Cys-89, Cys-69–Cys-82, Cys-75–Cys-81, Cys-98–Cys-115, Cys-103–Cys-133, Cys-113–Cys-126, Cys-119–Cys-125, Cys-144–Cys-190, and Cys-152–Cys-364. The Cell attachment site motif lies at 78 to 80; it reads RGD. The interval 160–544 is phosphodiesterase; it reads PVILFSMDGF…HGSLNHLLKV (385 aa). Position 167 (Asp-167) interacts with Zn(2+). ATP is bound at residue Lys-204. Thr-205 is a binding site for Zn(2+). The active-site Nucleophile is Thr-205. Asn-226 serves as a coordination point for ATP. Asn-236 is a glycosylation site (N-linked (GlcNAc...) asparagine). Residue Asp-275 participates in ATP binding. Asn-279 is a glycosylation site (N-linked (GlcNAc...) asparagine). An ATP-binding site is contributed by Tyr-289. The N-linked (GlcNAc...) asparagine glycan is linked to Asn-290. Zn(2+) contacts are provided by Asp-325, His-329, Asp-372, and His-373. Disulfide bonds link Cys-380-Cys-477, Cys-428-Cys-817, Cys-561-Cys-622, Cys-574-Cys-678, Cys-576-Cys-663, and Cys-786-Cys-796. A glycan (N-linked (GlcNAc...) asparagine) is linked at Asn-425. Residue His-482 participates in Zn(2+) binding. The N-linked (GlcNAc...) asparagine glycan is linked to Asn-532. The segment at 581 to 874 is nuclease; that stretch reads TNSDLERVNQ…TYLPVFETVI (294 aa). Asn-677, Asn-686, and Asn-698 each carry an N-linked (GlcNAc...) asparagine glycan. The Ca(2+) site is built by Asp-751, Asp-755, His-757, and Asp-759. Residues Asn-770, Asn-788, and Asn-820 are each glycosylated (N-linked (GlcNAc...) asparagine).

Belongs to the nucleotide pyrophosphatase/phosphodiesterase family. Monomer and homodimer. Requires Zn(2+) as cofactor. N-glycosylated. N-glycosylation is necessary for normal transport to the cell membrane, but is not the apical targeting signal.

The protein resides in the cell membrane. It is found in the apical cell membrane. It localises to the secreted. It carries out the reaction a ribonucleoside 5'-triphosphate + H2O = a ribonucleoside 5'-phosphate + diphosphate + H(+). It catalyses the reaction ATP + H2O = AMP + diphosphate + H(+). The enzyme catalyses CTP + H2O = CMP + diphosphate + H(+). The catalysed reaction is GTP + H2O = GMP + diphosphate + H(+). It carries out the reaction UTP + H2O = UMP + diphosphate + H(+). It catalyses the reaction UDP-N-acetyl-alpha-D-glucosamine + H2O = N-acetyl-alpha-D-glucosamine 1-phosphate + UMP + 2 H(+). The enzyme catalyses P(1),P(3)-bis(5'-adenosyl) triphosphate + H2O = AMP + ADP + 2 H(+). The catalysed reaction is P(1),P(4)-bis(5'-adenosyl) tetraphosphate + H2O = AMP + ATP + 2 H(+). It carries out the reaction P(1),P(5)-bis(5'-adenosyl) pentaphosphate + H2O = adenosine 5'-tetraphosphate + AMP + 2 H(+). It catalyses the reaction P(1),P(4)-bis(5'-guanosyl) tetraphosphate + H2O = GMP + GTP + 2 H(+). The enzyme catalyses Hydrolytically removes 5'-nucleotides successively from the 3'-hydroxy termini of 3'-hydroxy-terminated oligonucleotides.. In terms of biological role, hydrolase that metabolizes extracellular nucleotides, including ATP, GTP, UTP and CTP. Limits mast cells and basophils response during inflammation and during the chronic phases of allergic responses by eliminating extracellular ATP, a signaling molecule activating these cells in an autocrine manner. Metabolizes extracellular ATP in the lumen of the small intestine, and thereby prevents ATP-induced apoptosis of intestinal plasmacytoid dendritic cells. Has a broad specificity and can also hydrolyze UDP-GlcNAc into UMP and GlcNAc-1-phosphate and potentially several other intracellular nucleotide sugars, including UDP-GalNAc, CMP-NeuAc, GDP-Fuc, and UDP-GlcA. Thereby, could modulate glycan biosynthesis and protein glycosylation. Can hydrolyze extracellular dinucleoside polyphosphates, including the vasoactive adenosine polyphosphates as well. In addition, displays an alkaline phosphodiesterase activity in vitro. The protein is Ectonucleotide pyrophosphatase/phosphodiesterase family member 3 (ENPP3) of Bos taurus (Bovine).